A 116-amino-acid polypeptide reads, in one-letter code: Cocaine- and amphetamine-regulated transcript protein (116 aa).

A signal peptide spans Met-1 to Ala-27. At Tyr-41 the chain carries Phosphotyrosine. Ser-48 carries the phosphoserine modification. 3 disulfide bridges follow: Cys-82–Cys-100, Cys-88–Cys-108, and Cys-102–Cys-115.

The protein belongs to the CART family. In terms of tissue distribution, hypothalamus. Found in neurons of the ventrolateral part of the arcuate nucleus, in the external zone of the median eminence, and also found in terminals in the periventricular part of the paraventricular nucleus.

The protein localises to the secreted. In terms of biological role, satiety factor closely associated with the actions of leptin and neuropeptide Y; this anorectic peptide inhibits both normal and starvation-induced feeding and completely blocks the feeding response induced by neuropeptide Y and regulated by leptin in the hypothalamus. It promotes neuronal development and survival in vitro. This chain is Cocaine- and amphetamine-regulated transcript protein (CARTPT), found in Homo sapiens (Human).